Reading from the N-terminus, the 415-residue chain is MMLGPEGGEGYVVKLRGLPWSCSIEDVQNFLSDCTIHDGVAGVHFIYTREGRQSGEAFVELESEDDVKLALKKDRESMGHRYIEVFKSHRTEMDWVLKHSGPNSADSANDGFVRLRGLPFGCTKEEIVQFFSGLEIVPNGITLPVDPEGKITGEAFVQFASQELAEKALGKHKERIGHRYIEVFKSSQEEVRSYSDPPLKFMSVQRPGPYDRPGTARRYIGIVKQAGLDRMRSGAYSAGYGGYEEYSGLSDGYGFTTDLFGRDLSYCLSGMYDHRYGDSEFTVQSTTGHCVHMRGLPYKATENDIYNFFSPLNPVRVHIEIGPDGRVTGEADVEFATHEEAVAAMSKDRANMQHRYIELFLNSTTGASNGAYSSQVMQGMGVSAAQATYSGLESQSVSGCYGAGYSGQNSMGGYD.

At Met1 the chain carries N-acetylmethionine. The residue at position 2 (Met2) is an N-acetylmethionine; in Heterogeneous nuclear ribonucleoprotein F, N-terminally processed. The region spanning 11-90 (YVVKLRGLPW…RYIEVFKSHR (80 aa)) is the RRM 1 domain. Residue Lys72 forms a Glycyl lysine isopeptide (Lys-Gly) (interchain with G-Cter in SUMO) linkage. The tract at residues 81 to 86 (RYIEVF) is interaction with RNA. A Glycyl lysine isopeptide (Lys-Gly) (interchain with G-Cter in SUMO2) cross-link involves residue Lys87. 3 positions are modified to phosphoserine: Ser104, Ser107, and Ser161. Positions 111–188 (GFVRLRGLPF…RYIEVFKSSQ (78 aa)) constitute an RRM 2 domain. Residue Lys167 forms a Glycyl lysine isopeptide (Lys-Gly) (interchain with G-Cter in SUMO2) linkage. The segment at 179 to 184 (RYIEVF) is interaction with RNA. Residue Lys185 forms a Glycyl lysine isopeptide (Lys-Gly) (interchain with G-Cter in SUMO2) linkage. Residues Ser187, Ser193, and Ser195 each carry the phosphoserine modification. At Lys200 the chain carries N6-acetyllysine; alternate. A Glycyl lysine isopeptide (Lys-Gly) (interchain with G-Cter in SUMO2); alternate cross-link involves residue Lys200. Phosphothreonine is present on Thr215. At Lys224 the chain carries N6-acetyllysine; alternate. A Glycyl lysine isopeptide (Lys-Gly) (interchain with G-Cter in SUMO2); alternate cross-link involves residue Lys224. Position 265 is a phosphoserine (Ser265). Positions 289–366 (HCVHMRGLPY…IELFLNSTTG (78 aa)) constitute an RRM 3 domain. Residues 355-360 (RYIELF) are interaction with RNA.

Identified in the spliceosome C complex. Interacts with AGO1, AGO2, TBP and TXNL4/DIM1. Sumoylated.

The protein resides in the nucleus. It is found in the nucleoplasm. In terms of biological role, component of the heterogeneous nuclear ribonucleoprotein (hnRNP) complexes which provide the substrate for the processing events that pre-mRNAs undergo before becoming functional, translatable mRNAs in the cytoplasm. Plays a role in the regulation of alternative splicing events. Binds G-rich sequences in pre-mRNAs and keeps target RNA in an unfolded state. In Mus musculus (Mouse), this protein is Heterogeneous nuclear ribonucleoprotein F (Hnrnpf).